The primary structure comprises 504 residues: ATP synthase subunit alpha, chloroplastic (504 aa).

170–177 is a binding site for ATP; the sequence is GDRQTGKT.

This sequence belongs to the ATPase alpha/beta chains family. As to quaternary structure, F-type ATPases have 2 components, CF(1) - the catalytic core - and CF(0) - the membrane proton channel. CF(1) has five subunits: alpha(3), beta(3), gamma(1), delta(1), epsilon(1). CF(0) has four main subunits: a, b, b' and c.

Its subcellular location is the plastid. The protein resides in the chloroplast thylakoid membrane. It carries out the reaction ATP + H2O + 4 H(+)(in) = ADP + phosphate + 5 H(+)(out). In terms of biological role, produces ATP from ADP in the presence of a proton gradient across the membrane. The alpha chain is a regulatory subunit. The protein is ATP synthase subunit alpha, chloroplastic of Jasminum nudiflorum (Winter jasmine).